The chain runs to 285 residues: Energy-coupling factor transporter ATP-binding protein EcfA1 (285 aa).

Residues 9–246 (VTVEHLSFTY…VSLIKNAGLD (238 aa)) form the ABC transporter domain. 43–50 (GHNGSGKS) is an ATP binding site.

The protein belongs to the ABC transporter superfamily. Energy-coupling factor EcfA family. As to quaternary structure, forms a stable energy-coupling factor (ECF) transporter complex composed of 2 membrane-embedded substrate-binding proteins (S component), 2 ATP-binding proteins (A component) and 2 transmembrane proteins (T component).

The protein localises to the cell membrane. Its function is as follows. ATP-binding (A) component of a common energy-coupling factor (ECF) ABC-transporter complex. Unlike classic ABC transporters this ECF transporter provides the energy necessary to transport a number of different substrates. In Lactobacillus gasseri (strain ATCC 33323 / DSM 20243 / BCRC 14619 / CIP 102991 / JCM 1131 / KCTC 3163 / NCIMB 11718 / NCTC 13722 / AM63), this protein is Energy-coupling factor transporter ATP-binding protein EcfA1.